The sequence spans 355 residues: Phosphoribosylformylglycinamidine cyclo-ligase (355 aa).

It belongs to the AIR synthase family.

It localises to the cytoplasm. It catalyses the reaction 2-formamido-N(1)-(5-O-phospho-beta-D-ribosyl)acetamidine + ATP = 5-amino-1-(5-phospho-beta-D-ribosyl)imidazole + ADP + phosphate + H(+). It participates in purine metabolism; IMP biosynthesis via de novo pathway; 5-amino-1-(5-phospho-D-ribosyl)imidazole from N(2)-formyl-N(1)-(5-phospho-D-ribosyl)glycinamide: step 2/2. This Beijerinckia indica subsp. indica (strain ATCC 9039 / DSM 1715 / NCIMB 8712) protein is Phosphoribosylformylglycinamidine cyclo-ligase.